We begin with the raw amino-acid sequence, 305 residues long: MPIKIPETLPAFDVLSSEGVMVMGQGRADRQDIRPLQIGLLNLMPKKIQTETQFARLIGATPLQIDLTLIRMTEHQSKHTSAAHMEAFYRPFAEVRDRKFDGLIITGAPIEHLEFADVTYWDELREVFAWTQTNVHATFGVCWGGMAMINHFHGVQKHILPAKAFGCFRHRNLAPASPYLRGFSDDCVIPVSRWTEMKQSEIDAVPGLTTLLGSPEVGPCLVEDPGHRALYIFNHFEYDTGTLKEEYDRDVENGTPINVPTNYYPDDDPARAPLNRWRSHAHLLYGNWLNEIYQTTEYDLEKIGT.

Cysteine 142 (acyl-thioester intermediate) is an active-site residue. The substrate site is built by lysine 163 and serine 192. The active-site Proton acceptor is the histidine 235. Glutamate 237 is an active-site residue. Arginine 249 is a binding site for substrate.

Belongs to the MetA family.

It localises to the cytoplasm. The catalysed reaction is L-homoserine + acetyl-CoA = O-acetyl-L-homoserine + CoA. It functions in the pathway amino-acid biosynthesis; L-methionine biosynthesis via de novo pathway; O-acetyl-L-homoserine from L-homoserine: step 1/1. Transfers an acetyl group from acetyl-CoA to L-homoserine, forming acetyl-L-homoserine. The protein is Homoserine O-acetyltransferase of Dinoroseobacter shibae (strain DSM 16493 / NCIMB 14021 / DFL 12).